The chain runs to 513 residues: 2,3-bisphosphoglycerate-independent phosphoglycerate mutase (513 aa).

Residues Asp-13 and Ser-63 each contribute to the Mn(2+) site. Ser-63 (phosphoserine intermediate) is an active-site residue. Residues His-124, Arg-154–Asp-155, Arg-186, Arg-192, Arg-262–Arg-265, and Lys-335 each bind substrate. Positions 403, 407, 444, 445, and 463 each coordinate Mn(2+).

The protein belongs to the BPG-independent phosphoglycerate mutase family. In terms of assembly, monomer. Requires Mn(2+) as cofactor.

The catalysed reaction is (2R)-2-phosphoglycerate = (2R)-3-phosphoglycerate. The protein operates within carbohydrate degradation; glycolysis; pyruvate from D-glyceraldehyde 3-phosphate: step 3/5. Catalyzes the interconversion of 2-phosphoglycerate and 3-phosphoglycerate. This is 2,3-bisphosphoglycerate-independent phosphoglycerate mutase from Myxococcus xanthus (strain DK1622).